The sequence spans 462 residues: MGFLKPTMAILFLAMVAVSSAVDMSIISYDEKHGVSTTGGRSEAEVMSIYEAWLVKHGKAQSQNSLVEKDRRFEIFKDNLRFVDEHNEKNLSYRLGLTRFADLTNDEYRSKYLGAKMEKKGERRTSLRYEARVGDELPESIDWRKKGAVAEVKDQGGCGSCWAFSTIGAVEGINQIVTGDLITLSEQELVDCDTSYNEGCNGGLMDYAFEFIIKNGGIDTDKDYPYKGVDGTCDQIRKNAKVVTIDSYEDVPTYSEESLKKAVAHQPISIAIEAGGRAFQLYDSGIFDGSCGTQLDHGVVAVGYGTENGKDYWIVRNSWGKSWGESGYLRMARNIASSSGKCGIAIEPSYPIKNGENPPNPGPSPPSPIKPPTQCDSYYTCPESNTCCCLFEYGKYCFAWGCCPLEAATCCDDNYSCCPHEYPVCDLDQGTCLLSKNSPFSVKALKRKPATPFWSQGRKNIA.

The signal sequence occupies residues 1-21 (MGFLKPTMAILFLAMVAVSSA). Positions 22–136 (VDMSIISYDE…LRYEARVGDE (115 aa)) are cleaved as a propeptide — activation peptide. N90 is a glycosylation site (N-linked (GlcNAc...) asparagine). Intrachain disulfides connect C158/C200, C192/C233, C291/C342, C375/C387, and C381/C402. C161 is a catalytic residue. Catalysis depends on residues H297 and N317. Positions 353–462 (KNGENPPNPG…FWSQGRKNIA (110 aa)) are cleaved as a propeptide — removed in mature form. A glycan (N-linked (GlcNAc...) asparagine) is linked at N414.

Belongs to the peptidase C1 family. In terms of assembly, interacts with SERPIN1. Interacts with PRN2. Interacts with WSCP. Interacts with TZF4, TZF5 and TZF6.

The protein localises to the vacuole. It localises to the golgi apparatus. It is found in the cytoplasm. Its subcellular location is the stress granule. The protein resides in the P-body. With respect to regulation, inhibited by the cysteine protease inhibitor E64 (L-trans-epoxysuccinyl-leucylamide-(4-guanido)-butane). Its function is as follows. Cysteine protease that plays a role in immunity, senescence, and biotic and abiotic stresses. Involved in immunity against the necrotrophic fungal pathogen Botrytis cinerea. Involved in elicitor-stimulated programmed cell death (PCD). During infection by the necrotrophic fungal pathogen Botrytis cinerea, functions as a PCD-promoting protease that is released from the ER body or vacuole to the cytoplasm. Accumulates in endoplasmic reticulum-derived bodies in epidermal cells and may participate in cell death in stressed or injured cells. Involved in water stress-induced cell death through its protease activity that is released to the cytoplasm after vacuolar collapse. Possesses protease activity in vitro and is involved in cell death in the transmitting tract and septum epidermis during flower development. Possesses peptide ligase activity. Can ligate peptides to unmodified N-termini of acceptor proteins. Probably ligates through a thioester intermediate. This is Cysteine proteinase RD21A from Arabidopsis thaliana (Mouse-ear cress).